Consider the following 544-residue polypeptide: Ribosomal protein S6 kinase-like 1 (544 aa).

An MIT domain is found at 87–115 (VHVDPNKERREAVKLKITKYLRRAEEIFN). Positions 145 to 534 (SALEQLKGCR…TSRLKSHPFF (390 aa)) constitute a Protein kinase domain. ATP contacts are provided by residues 151–159 (KGCRVVGII) and Lys177. Disordered stretches follow at residues 262–344 (PAEL…HWVR) and 353–372 (AYGRGRGRNPPSANRASLGS). The segment covering 303–313 (SRPSAVFSSDP) has biased composition (polar residues). Asp407 (proton acceptor) is an active-site residue.

This sequence belongs to the protein kinase superfamily. Ser/Thr protein kinase family. S6 kinase subfamily.

The catalysed reaction is L-seryl-[protein] + ATP = O-phospho-L-seryl-[protein] + ADP + H(+). It carries out the reaction L-threonyl-[protein] + ATP = O-phospho-L-threonyl-[protein] + ADP + H(+). The polypeptide is Ribosomal protein S6 kinase-like 1 (Rps6kl1) (Mus musculus (Mouse)).